A 361-amino-acid polypeptide reads, in one-letter code: Phospho-N-acetylmuramoyl-pentapeptide-transferase (361 aa).

10 helical membrane-spanning segments follow: residues 18 to 38 (VFNYLTFRSIVSALTALILVL), 73 to 93 (TMGGVLIIVAIVISVLLWGDL), 97 to 117 (FIWVILLVTVAFSAIGWMDDY), 135 to 155 (LLQSIIGALAAVYLYFSATTG), 168 to 188 (VLPNLGLFYIVLAYFVIVGSS), 196 to 216 (GLDGLALMPTVMIGAALGVFA), 235 to 255 (GAGEVVVFCSALVGAGLGFLW), 263 to 283 (VFMGDVGSLGLGAALGVTAVV), 288 to 308 (LVYFLMGGIFVAETLSVILQV), and 338 to 358 (KVIVRFWIITFILVLCGLATL).

Belongs to the glycosyltransferase 4 family. MraY subfamily. It depends on Mg(2+) as a cofactor.

It is found in the cell inner membrane. It carries out the reaction UDP-N-acetyl-alpha-D-muramoyl-L-alanyl-gamma-D-glutamyl-meso-2,6-diaminopimeloyl-D-alanyl-D-alanine + di-trans,octa-cis-undecaprenyl phosphate = di-trans,octa-cis-undecaprenyl diphospho-N-acetyl-alpha-D-muramoyl-L-alanyl-D-glutamyl-meso-2,6-diaminopimeloyl-D-alanyl-D-alanine + UMP. It functions in the pathway cell wall biogenesis; peptidoglycan biosynthesis. Its function is as follows. Catalyzes the initial step of the lipid cycle reactions in the biosynthesis of the cell wall peptidoglycan: transfers peptidoglycan precursor phospho-MurNAc-pentapeptide from UDP-MurNAc-pentapeptide onto the lipid carrier undecaprenyl phosphate, yielding undecaprenyl-pyrophosphoryl-MurNAc-pentapeptide, known as lipid I. This chain is Phospho-N-acetylmuramoyl-pentapeptide-transferase, found in Coxiella burnetii (strain CbuK_Q154) (Coxiella burnetii (strain Q154)).